Consider the following 327-residue polypeptide: Lipoyl synthase (327 aa).

Cysteine 72, cysteine 77, cysteine 83, cysteine 98, cysteine 102, cysteine 105, and serine 313 together coordinate [4Fe-4S] cluster. Residues 83-302 (CWSHGTATIM…RKVGLEKGFL (220 aa)) form the Radical SAM core domain.

Belongs to the radical SAM superfamily. Lipoyl synthase family. The cofactor is [4Fe-4S] cluster.

It is found in the cytoplasm. It carries out the reaction [[Fe-S] cluster scaffold protein carrying a second [4Fe-4S](2+) cluster] + N(6)-octanoyl-L-lysyl-[protein] + 2 oxidized [2Fe-2S]-[ferredoxin] + 2 S-adenosyl-L-methionine + 4 H(+) = [[Fe-S] cluster scaffold protein] + N(6)-[(R)-dihydrolipoyl]-L-lysyl-[protein] + 4 Fe(3+) + 2 hydrogen sulfide + 2 5'-deoxyadenosine + 2 L-methionine + 2 reduced [2Fe-2S]-[ferredoxin]. It participates in protein modification; protein lipoylation via endogenous pathway; protein N(6)-(lipoyl)lysine from octanoyl-[acyl-carrier-protein]: step 2/2. Its function is as follows. Catalyzes the radical-mediated insertion of two sulfur atoms into the C-6 and C-8 positions of the octanoyl moiety bound to the lipoyl domains of lipoate-dependent enzymes, thereby converting the octanoylated domains into lipoylated derivatives. This Francisella tularensis subsp. novicida (strain U112) protein is Lipoyl synthase.